The chain runs to 186 residues: UPF0669 protein C6orf120 homolog (186 aa).

The N-terminal stretch at 1 to 19 (MVPFWAGLLVLSALPQTLG) is a signal peptide. Residue Asn-47 is glycosylated (N-linked (GlcNAc...) asparagine). Positions 141-165 (KNSYSSDETPGQPRQSQGPEDTEEE) are disordered. A compositionally biased stretch (polar residues) spans 142–159 (NSYSSDETPGQPRQSQGP).

This sequence belongs to the UPF0669 family.

The protein resides in the secreted. This chain is UPF0669 protein C6orf120 homolog, found in Danio rerio (Zebrafish).